Consider the following 203-residue polypeptide: uncharacterized protein (203 aa).

This is an uncharacterized protein from Haemophilus influenzae (strain ATCC 51907 / DSM 11121 / KW20 / Rd).